Here is a 467-residue protein sequence, read N- to C-terminus: Transcription factor TGAL7 (467 aa).

The segment covering 1-10 has biased composition (basic and acidic residues); sequence MGGSREEDRQ. Disordered stretches follow at residues 1–42 and 105–184; these read MGGS…KESS and QLQV…KTLR. A compositionally biased stretch (low complexity) spans 25 to 41; it reads SSSPTTMIASSSMSKES. The span at 120–129 shows a compositional bias: polar residues; that stretch reads QGGQKINSSV. Residues 145–157 show a composition bias toward basic and acidic residues; that stretch reads KDNKNSSLIKKEG. Residues 158 to 168 show a composition bias toward polar residues; the sequence is SSSGKGATTSN. Basic and acidic residues predominate over residues 169 to 182; that stretch reads DPEREGRRTLDPKT. Positions 179–223 constitute a bZIP domain; the sequence is DPKTLRRLAQNREAARKSRLRKKAYIQQLESSRIRLSQLEQQVHV. Residues 181-201 form a basic motif region; it reads KTLRRLAQNREAARKSRLRKK. The leucine-zipper stretch occupies residues 207 to 221; that stretch reads LESSRIRLSQLEQQV. Positions 247-458 constitute a DOG1 domain; sequence ASLFDLEYGR…RALSTLWVAR (212 aa).

This sequence belongs to the bZIP family. In terms of assembly, interacts with NPR5/NH4, NH5.1 and NH5.2.

The protein resides in the nucleus. Its function is as follows. Transcriptional regulator involved in defense response. This is Transcription factor TGAL7 from Oryza sativa subsp. japonica (Rice).